A 437-amino-acid polypeptide reads, in one-letter code: Peptidyl-prolyl cis-trans isomerase CYP38, chloroplastic (437 aa).

The transit peptide at 1–36 directs the protein to the chloroplast; sequence MAAAFASLPTFSVVNSSRFPRRRIGFSCSKKPLEVR. A thylakoid-targeting transit peptide spans 37-92; it reads CSSGNTRYTKQRGAFTSLKECAISLALSVGLMVSVPSIALPPNAHAVANPVIPDVS. One can recognise a PPIase cyclophilin-type domain in the interval 245–437; the sequence is VKIKDNPNIE…LANPSYKIAG (193 aa).

In terms of tissue distribution, ubiquitous. Lower levels of expression in roots.

It localises to the plastid. It is found in the chloroplast thylakoid lumen. It carries out the reaction [protein]-peptidylproline (omega=180) = [protein]-peptidylproline (omega=0). Its function is as follows. Required for the assembly and stabilization of PSII, but has no PPIases activity. This chain is Peptidyl-prolyl cis-trans isomerase CYP38, chloroplastic (CYP38), found in Arabidopsis thaliana (Mouse-ear cress).